The following is a 99-amino-acid chain: DNA-directed RNA polymerase subunit omega (99 aa).

Belongs to the RNA polymerase subunit omega family. In terms of assembly, the RNAP catalytic core consists of 2 alpha, 1 beta, 1 beta' and 1 omega subunit. When a sigma factor is associated with the core the holoenzyme is formed, which can initiate transcription.

The enzyme catalyses RNA(n) + a ribonucleoside 5'-triphosphate = RNA(n+1) + diphosphate. In terms of biological role, promotes RNA polymerase assembly. Latches the N- and C-terminal regions of the beta' subunit thereby facilitating its interaction with the beta and alpha subunits. The chain is DNA-directed RNA polymerase subunit omega from Xanthomonas axonopodis pv. citri (strain 306).